Reading from the N-terminus, the 599-residue chain is CAP-Gly domain-containing linker protein 4 (599 aa).

ANK repeat units follow at residues 65-101 (TSVS…NVND), 149-180 (TNMN…DVDA), and 186-215 (NFGT…NPAF). One can recognise a CAP-Gly 1 domain in the interval 303 to 345 (GTTEFASGQWAGIELDEPEGKNNGSVGRVQYFKCAPKYGIFAP). The interval 387–482 (SGLMTSKKEN…TSAANNTHRE (96 aa)) is disordered. The span at 443–462 (LSTSSSSGKKTLSKSPSLPS) shows a compositional bias: low complexity. Over residues 468 to 478 (LKSSTTSAANN) the composition is skewed to polar residues. Residues 505–547 (GTTNFAPGYWYGIELEKPHGKNDGSVGGVQYFSCSPRYGIFAP) enclose the CAP-Gly 2 domain. Position 557 is a phosphoserine (Ser-557). Positions 565-599 (SSNKQNHSYPGFRRSFSTTSASSQKEINRRNAFAK) are disordered. Residues 576–587 (FRRSFSTTSASS) are compositionally biased toward low complexity.

This chain is CAP-Gly domain-containing linker protein 4 (Clip4), found in Rattus norvegicus (Rat).